Consider the following 247-residue polypeptide: Segregation and condensation protein A (247 aa).

It belongs to the ScpA family. As to quaternary structure, component of a cohesin-like complex composed of ScpA, ScpB and the Smc homodimer, in which ScpA and ScpB bind to the head domain of Smc. The presence of the three proteins is required for the association of the complex with DNA.

The protein resides in the cytoplasm. Its function is as follows. Participates in chromosomal partition during cell division. May act via the formation of a condensin-like complex containing Smc and ScpB that pull DNA away from mid-cell into both cell halves. The protein is Segregation and condensation protein A of Bacillus cereus (strain G9842).